Consider the following 152-residue polypeptide: MSDAATRRLMKELAQLKSEAPEGLLVDNTSTSNDLKQWKIGVVGAEGTLYAGEVFMLQFTFGPQYPFNSPEVMFVGETIPAHPHIYSNGHICLSILSDDWTPALSVQSVCLSILSMLSSSKEKKHPIDDAIYVRTCSKNPSKTRWWFHDDSV.

Met1 participates in a covalent cross-link: Peptide (Met-Gly) (interchain with G-Cter in ubiquitin). The 149-residue stretch at 4–152 folds into the UBC core domain; the sequence is AATRRLMKEL…TRWWFHDDSV (149 aa). Cys92 functions as the Glycyl thioester intermediate in the catalytic mechanism.

Belongs to the ubiquitin-conjugating enzyme family.

The catalysed reaction is S-ubiquitinyl-[E1 ubiquitin-activating enzyme]-L-cysteine + [E2 ubiquitin-conjugating enzyme]-L-cysteine = [E1 ubiquitin-activating enzyme]-L-cysteine + S-ubiquitinyl-[E2 ubiquitin-conjugating enzyme]-L-cysteine.. It carries out the reaction S-ubiquitinyl-[E1 ubiquitin-activating enzyme]-L-cysteine + [acceptor protein]-N-terminal-amino acid = [E1 ubiquitin-activating enzyme]-L-cysteine + N-terminal-ubiquitinyl-[acceptor protein].. The protein operates within protein modification; protein ubiquitination. Functionally, accepts ubiquitin from the E1 complex and catalyzes its covalent attachment to other proteins. Together with ubc-18, required for the ubiquitination of membranous organelles, and the removal of paternal mitochondria from early embryos. This chain is Ubiquitin-conjugating enzyme E2 W, found in Caenorhabditis elegans.